The following is a 653-amino-acid chain: Fusexin 1 (653 aa).

Residues 1-23 (MKNGLKASVVALFFLLAASSASA) form the signal peptide. The Extracellular segment spans residues 24 to 559 (ATNSVDTVTY…MEKALSGNAG (536 aa)). Disulfide bonds link C126–C166, C397–C440, C467–C490, and C502–C519. The fusion loop stretch occupies residues 154–159 (DTWTGQ). A helical transmembrane segment spans residues 560–580 (ALTWAQLLLSFIGFLAGFALV). The Cytoplasmic segment spans residues 581-600 (GVKLGKMVDGLATEFIPLSD). 2 helical membrane-spanning segments follow: residues 601-621 (AVVR…AVYQ) and 622-642 (LVTN…TGYL). Residues 643 to 653 (YLKGTTPDINL) lie on the Cytoplasmic side of the membrane.

Belongs to the HAP2/GCS1 family. Fusexin 1 subfamily. In terms of assembly, homotrimer stabilized by interdomain contacts and numerous Ca(2+) and Na(+) ions.

The protein resides in the cell surface. Its subcellular location is the cell membrane. Functionally, exhibits fusogenic activity. Mediates cell-cell fusion in mammalian cells (bilateral fusion). The polypeptide is Fusexin 1 (Haloferax sp. (strain Q22)).